Reading from the N-terminus, the 861-residue chain is Isoleucine--tRNA ligase (861 aa).

The 'HIGH' region motif lies at 57–67 (PYANGNIHVGH). L-isoleucyl-5'-AMP is bound at residue glutamate 549. The 'KMSKS' region motif lies at 590 to 594 (KMSKS). An ATP-binding site is contributed by lysine 593.

The protein belongs to the class-I aminoacyl-tRNA synthetase family. IleS type 1 subfamily. Monomer.

Its subcellular location is the cytoplasm. The enzyme catalyses tRNA(Ile) + L-isoleucine + ATP = L-isoleucyl-tRNA(Ile) + AMP + diphosphate. Catalyzes the attachment of isoleucine to tRNA(Ile). As IleRS can inadvertently accommodate and process structurally similar amino acids such as valine, to avoid such errors it has two additional distinct tRNA(Ile)-dependent editing activities. One activity is designated as 'pretransfer' editing and involves the hydrolysis of activated Val-AMP. The other activity is designated 'posttransfer' editing and involves deacylation of mischarged Val-tRNA(Ile). The sequence is that of Isoleucine--tRNA ligase from Mycoplasma pneumoniae (strain ATCC 29342 / M129 / Subtype 1) (Mycoplasmoides pneumoniae).